The primary structure comprises 180 residues: Large ribosomal subunit protein uL6 (180 aa).

Belongs to the universal ribosomal protein uL6 family. Part of the 50S ribosomal subunit.

Its function is as follows. This protein binds to the 23S rRNA, and is important in its secondary structure. It is located near the subunit interface in the base of the L7/L12 stalk, and near the tRNA binding site of the peptidyltransferase center. The sequence is that of Large ribosomal subunit protein uL6 from Lachnoclostridium phytofermentans (strain ATCC 700394 / DSM 18823 / ISDg) (Clostridium phytofermentans).